The primary structure comprises 274 residues: 4-diphosphocytidyl-2-C-methyl-D-erythritol kinase (274 aa).

K10 is a catalytic residue. Residue 101 to 111 (PTQAGLGGGSA) coordinates ATP. Residue D143 is part of the active site.

This sequence belongs to the GHMP kinase family. IspE subfamily.

The enzyme catalyses 4-CDP-2-C-methyl-D-erythritol + ATP = 4-CDP-2-C-methyl-D-erythritol 2-phosphate + ADP + H(+). Its pathway is isoprenoid biosynthesis; isopentenyl diphosphate biosynthesis via DXP pathway; isopentenyl diphosphate from 1-deoxy-D-xylulose 5-phosphate: step 3/6. Its function is as follows. Catalyzes the phosphorylation of the position 2 hydroxy group of 4-diphosphocytidyl-2C-methyl-D-erythritol. The chain is 4-diphosphocytidyl-2-C-methyl-D-erythritol kinase from Helicobacter pylori (strain HPAG1).